We begin with the raw amino-acid sequence, 534 residues long: ATP-dependent RNA helicase DBP3 (534 aa).

Residues 1–96 are disordered; it reads MGSKRKHESG…VSSSSSGYTQ (96 aa). Over residues 8 to 30 the composition is skewed to basic and acidic residues; that stretch reads ESGDVEVKKPKHDNEVKGKEKKE. Positions 31-53 are enriched in basic residues; the sequence is KKEKKEKKEKKEKKEKKEKKEKK. The span at 54–63 shows a compositional bias: basic and acidic residues; that stretch reads EKKEKNEKKE. Low complexity predominate over residues 82-92; sequence STVSTVSSSSS. A Q motif motif is present at residues 131-157; that stretch reads LSFDHVQLQSKIAPIVTKFPKPTPIQS. A Helicase ATP-binding domain is found at 160–330; that stretch reads WPYLLNGDDV…ATFMNKAVKV (171 aa). 173–180 is a binding site for ATP; that stretch reads AETGSGKT. The short motif at 278–281 is the DEAD box element; sequence DEAD. The 146-residue stretch at 359–504 folds into the Helicase C-terminal domain; the sequence is RLLQLLRQYG…PVPDELLKFG (146 aa).

Belongs to the DEAD box helicase family. DDX5/DBP2 subfamily.

Its subcellular location is the nucleus. It localises to the nucleolus. It catalyses the reaction ATP + H2O = ADP + phosphate + H(+). Functionally, ATP-dependent RNA helicase required for 60S ribosomal subunit synthesis. Involved in efficient pre-rRNA processing, predominantly at site A3, which is necessary for the normal formation of 25S and 5.8S rRNAs. This Meyerozyma guilliermondii (strain ATCC 6260 / CBS 566 / DSM 6381 / JCM 1539 / NBRC 10279 / NRRL Y-324) (Yeast) protein is ATP-dependent RNA helicase DBP3 (DBP3).